A 545-amino-acid polypeptide reads, in one-letter code: CTP synthase (545 aa).

The interval methionine 1–leucine 266 is amidoligase domain. Serine 14 contributes to the CTP binding site. Serine 14 contacts UTP. ATP contacts are provided by residues serine 15–isoleucine 20 and aspartate 72. The Mg(2+) site is built by aspartate 72 and glutamate 140. CTP contacts are provided by residues aspartate 147 to glutamate 149, lysine 187 to glutamine 192, and lysine 223. UTP contacts are provided by residues lysine 187–glutamine 192 and lysine 223. Lysine 239–valine 241 lines the ATP pocket. Positions threonine 291–arginine 542 constitute a Glutamine amidotransferase type-1 domain. Glycine 352 is an L-glutamine binding site. The active-site Nucleophile; for glutamine hydrolysis is the cysteine 379. Residues leucine 380–glutamine 383, glutamate 403, and arginine 470 each bind L-glutamine. Residues histidine 515 and glutamate 517 contribute to the active site.

Belongs to the CTP synthase family. Homotetramer.

It catalyses the reaction UTP + L-glutamine + ATP + H2O = CTP + L-glutamate + ADP + phosphate + 2 H(+). It carries out the reaction L-glutamine + H2O = L-glutamate + NH4(+). The catalysed reaction is UTP + NH4(+) + ATP = CTP + ADP + phosphate + 2 H(+). It participates in pyrimidine metabolism; CTP biosynthesis via de novo pathway; CTP from UDP: step 2/2. Allosterically activated by GTP, when glutamine is the substrate; GTP has no effect on the reaction when ammonia is the substrate. The allosteric effector GTP functions by stabilizing the protein conformation that binds the tetrahedral intermediate(s) formed during glutamine hydrolysis. Inhibited by the product CTP, via allosteric rather than competitive inhibition. Catalyzes the ATP-dependent amination of UTP to CTP with either L-glutamine or ammonia as the source of nitrogen. Regulates intracellular CTP levels through interactions with the four ribonucleotide triphosphates. This Shewanella frigidimarina (strain NCIMB 400) protein is CTP synthase.